We begin with the raw amino-acid sequence, 586 residues long: Non-structural glycoprotein GNS (586 aa).

A signal peptide spans 1–14 (MFLQLFNIVLIYGV). Residues 15–544 (RTSQSTWINY…QNKEYWNEES (530 aa)) lie on the Extracellular side of the membrane. N-linked (GlcNAc...) asparagine; by host glycosylation is found at N27, N68, N274, N350, N383, N476, N501, and N521. The helical transmembrane segment at 545–562 (SIWGISTIITVLGIYYIY) threads the bilayer. Residues 563–586 (RKNRREKIFLNMKHRVQRFFKLDY) lie on the Cytoplasmic side of the membrane.

This sequence belongs to the ephemerovirus glycoprotein family.

It localises to the host membrane. This Bos taurus (Bovine) protein is Non-structural glycoprotein GNS (GNS).